We begin with the raw amino-acid sequence, 583 residues long: Inactive carboxylesterase-like protein VdtD (583 aa).

The first 23 residues, 1–23, serve as a signal peptide directing secretion; sequence MFMTQIVFGIAPTLLKTFSHLTA. N-linked (GlcNAc...) asparagine glycosylation is found at N84, N109, N221, N265, N307, N350, N388, N448, and N468.

This sequence belongs to the type-B carboxylesterase/lipase family.

Its pathway is secondary metabolite biosynthesis. Its function is as follows. Inactive carboxylesterase-like protein; part of the gene cluster that mediates the biosynthesis of viriditoxin, one of the 'classical' secondary metabolites produced by fungi and that has antibacterial activity. The first step is performed by the polyketide synthase VdtA which condenses one acetyl-CoA and 6 malonyl-CoA units to form the heptaketide monomer backbone of viriditoxin. The product of VdtA is then O-methylated on C7 by the O-methyltransferase VdtC. The O-methyl group is important for the stereoselective coupling of the monomers at the final step of viriditoxin biosynthesis. The short-chain dehydrogenase/reductase VdtF then acts as a stereospecific reductase converting the pyrone to dihydropyrone via the reduction of the C3-C4 double bond. The FAD-binding monooxygenase VdtE then converts the ketone group into a methyl-ester group to yield semi-viriditoxin. Finally, the laccase VdtB is involved in dimerization of 2 semi-viriditoxin molecules to yield the final viriditoxin. VdtB is responsible for the regioselective 6,6'-coupling of semi-viriditoxin, which yields (M)-viriditoxin and (P)-viriditoxin at a ratio of 1:2. The non-catalytic carboxylesterase-like protein VdtD affects the stereochemistical outcome of the coupling. The highly reducing polyketide synthase VdtX is not involved in viriditoxin synthesis, but might possibly play a role in the production of additional metabolites not identified yet. This Byssochlamys spectabilis (Paecilomyces variotii) protein is Inactive carboxylesterase-like protein VdtD.